The following is a 188-amino-acid chain: UPF0200 protein M164_1169 (188 aa).

Position 15–22 (15–22) interacts with ATP; sequence GMPGSGKS.

It belongs to the UPF0200 family.

This Saccharolobus islandicus (strain M.16.4 / Kamchatka #3) (Sulfolobus islandicus) protein is UPF0200 protein M164_1169.